We begin with the raw amino-acid sequence, 169 residues long: DNA damage-inducible transcript 3 protein (169 aa).

The interaction with TRIB3 stretch occupies residues 10-18 (FGTLSSWEL). The interval 10-26 (FGTLSSWELEAWYEDLQ) is N-terminal. Residues Ser-14, Ser-15, Ser-30, and Ser-31 each carry the phosphoserine; by CK2 modification. The segment at 32–139 (DENGGTYVSP…KVAQLAEENE (108 aa)) is disordered. Positions 74-89 (TSTSQSPHSPDSSQSS) are enriched in low complexity. Phosphoserine; by MAPK14 is present on residues Ser-79 and Ser-82. Residues 99–162 (QGRTRKRKQS…EATRRALIDR (64 aa)) form the bZIP domain. A basic motif region spans residues 101-130 (RTRKRKQSGHSPARAGKQRMKEKEQENERK). Positions 119–139 (RMKEKEQENERKVAQLAEENE) are enriched in basic and acidic residues. The leucine-zipper stretch occupies residues 134–148 (LAEENERLKQEIERL).

The protein belongs to the bZIP family. Heterodimer. Interacts with TCF7L2/TCF4, EP300/P300, HDAC1, HDAC5 and HDAC6. Interacts with TRIB3 which blocks its association with EP300/P300. Interacts with FOXO3, CEBPB and ATF4. As to quaternary structure, interacts with isoform AltDDIT3 of DDIT3. In terms of processing, ubiquitinated, leading to its degradation by the proteasome. Phosphorylation at serine residues by MAPK14 enhances its transcriptional activation activity while phosphorylation at serine residues by CK2 inhibits its transcriptional activation activity.

The protein localises to the cytoplasm. It is found in the nucleus. Multifunctional transcription factor in endoplasmic reticulum (ER) stress response. Plays an essential role in the response to a wide variety of cell stresses and induces cell cycle arrest and apoptosis in response to ER stress. Plays a dual role both as an inhibitor of CCAAT/enhancer-binding protein (C/EBP) function and as an activator of other genes. Acts as a dominant-negative regulator of C/EBP-induced transcription: dimerizes with members of the C/EBP family, impairs their association with C/EBP binding sites in the promoter regions, and inhibits the expression of C/EBP regulated genes. Positively regulates the transcription of TRIB3, IL6, IL8, IL23, TNFRSF10B/DR5, PPP1R15A/GADD34, BBC3/PUMA, BCL2L11/BIM and ERO1L. Negatively regulates; expression of BCL2 and MYOD1, ATF4-dependent transcriptional activation of asparagine synthetase (ASNS), CEBPA-dependent transcriptional activation of hepcidin (HAMP) and CEBPB-mediated expression of peroxisome proliferator-activated receptor gamma (PPARG). Together with ATF4, mediates ER-mediated cell death by promoting expression of genes involved in cellular amino acid metabolic processes, mRNA translation and the unfolded protein response (UPR) in response to ER stress. Inhibits the canonical Wnt signaling pathway by binding to TCF7L2/TCF4, impairing its DNA-binding properties and repressing its transcriptional activity. Plays a regulatory role in the inflammatory response through the induction of caspase-11 (CASP4/CASP11) which induces the activation of caspase-1 (CASP1) and both these caspases increase the activation of pro-IL1B to mature IL1B which is involved in the inflammatory response. Acts as a major regulator of postnatal neovascularization through regulation of endothelial nitric oxide synthase (NOS3)-related signaling. This chain is DNA damage-inducible transcript 3 protein (DDIT3), found in Homo sapiens (Human).